A 493-amino-acid chain; its full sequence is MAKIMIQGTASSVGKSLIVAALCRIFKQDGYSVCPFKSQNMSLNSYITLDGKEMGRAQVLQAYAAGLEPEVYMNPILLKPTSDKKCQIIVNGKVYGNSTAMGYHNLKLKFKNMLKGHFNKLEEDFDIVVMEGAGSPAEINLRDRDIVNMGMAELVDAPVLLVGDIDKGGVFASLAGTMLLLNEGEKKRVKGTIINKFRGDVEILKPGLDMLEDIIHIPCLGVVPYTRLQLEDEDGAVEFNKKAYAPIDIAVIKMPHISNFTDLDALKSEEDVSIRFITSKEEFKEPDLLVIPGSKNTIEDLLYLRKCGLEESIKEYSKDGKIIGICGGYQVLGSKIKDPHNVETDLGEIDGLNLLDMETTFEKEKVTTRVSAKLLNEETKNTVYGYEIHMGISKYGENIKPLFKIYDKNGEKVDYFDGAINEKGNVMGTYIHGVFDGVVFREKIINELRVKKGLKKKKSQMYEHMREKELDKLADIVRHSLDMEKIYSIIGMK.

Positions 246 to 440 (PIDIAVIKMP…IHGVFDGVVF (195 aa)) constitute a GATase cobBQ-type domain. Residue Cys326 is the Nucleophile of the active site. Residue His432 is part of the active site.

It belongs to the CobB/CobQ family. CobQ subfamily.

The protein operates within cofactor biosynthesis; adenosylcobalamin biosynthesis. Its function is as follows. Catalyzes amidations at positions B, D, E, and G on adenosylcobyrinic A,C-diamide. NH(2) groups are provided by glutamine, and one molecule of ATP is hydrogenolyzed for each amidation. This Clostridium botulinum (strain Kyoto / Type A2) protein is Cobyric acid synthase.